The following is a 248-amino-acid chain: Granulin (248 aa).

It belongs to the polyhedrin family.

Component of the virus occlusion bodies, which are large proteinaceous structures, that protect the virus from the outside environment for extended periods until they are ingested by insect larvae. The chain is Granulin from Xestia c-nigrum granulosis virus (XnGV).